Consider the following 91-residue polypeptide: Conotoxin Im9.1 (91 aa).

Positions 1-23 (MSKVGVVPLIFLVLLSIAALQNG) are cleaved as a signal peptide. A propeptide spanning residues 24-55 (DDPRRQRDEKQSPQGDILRSTLTKYSYNIQRR) is cleaved from the precursor. 3 disulfide bridges follow: Cys-56-Cys-72, Cys-63-Cys-83, and Cys-66-Cys-86.

The protein belongs to the conotoxin M superfamily. As to expression, expressed by the venom duct.

It localises to the secreted. Its function is as follows. Probable neurotoxin. The polypeptide is Conotoxin Im9.1 (Conus imperialis (Imperial cone)).